The sequence spans 62 residues: Potassium channel toxin alpha-KTx 10.1 (62 aa).

The N-terminal stretch at 1 to 22 (MEGIAKITLILLFLFVTMHTFA) is a signal peptide. The propeptide occupies 23-28 (NWNTEA). Disulfide bonds link Cys31–Cys50, Cys36–Cys55, and Cys40–Cys57. Tyr60 carries the tyrosine amide modification.

Belongs to the short scorpion toxin superfamily. Potassium channel inhibitor family. Alpha-KTx 10 subfamily. In terms of tissue distribution, expressed by the venom gland.

It localises to the secreted. In terms of biological role, blocks Shaker B (Sh) and voltage-gated potassium-channels Kv1.1/KCNA1, Kv1.2/KCNA2, Kv1.3/KCNA3. Also inhibits small conductance calcium-activated potassium channels (KCNN) and intermediate conductance calcium-activated potassium channel (KCa3.1/KCNN4). The protein is Potassium channel toxin alpha-KTx 10.1 of Centruroides noxius (Mexican scorpion).